We begin with the raw amino-acid sequence, 254 residues long: Alcohol dehydrogenase (254 aa).

10-33 contributes to the NAD(+) binding site; that stretch reads FVAGLGGIGLDTSRELVKRDLKNL. Ser-138 is a substrate binding site. The active-site Proton acceptor is Tyr-151.

This sequence belongs to the short-chain dehydrogenases/reductases (SDR) family. As to quaternary structure, homodimer.

It catalyses the reaction a primary alcohol + NAD(+) = an aldehyde + NADH + H(+). The enzyme catalyses a secondary alcohol + NAD(+) = a ketone + NADH + H(+). This is Alcohol dehydrogenase (Adh) from Drosophila subobscura (Fruit fly).